The sequence spans 355 residues: D-alanine--D-alanine ligase (355 aa).

The 208-residue stretch at 143-350 (KTIFSNHKLP…IEQLVAKLVD (208 aa)) folds into the ATP-grasp domain. ATP is bound at residue 178 to 233 (LKKLKFPVFVKPSNSGSSLGISKVKNESEILLALEKAWGIDPRILIEEGLEVREIE). Positions 303, 317, and 319 each coordinate Mg(2+).

The protein belongs to the D-alanine--D-alanine ligase family. It depends on Mg(2+) as a cofactor. Mn(2+) is required as a cofactor.

The protein localises to the cytoplasm. It carries out the reaction 2 D-alanine + ATP = D-alanyl-D-alanine + ADP + phosphate + H(+). The protein operates within cell wall biogenesis; peptidoglycan biosynthesis. Its function is as follows. Cell wall formation. In Prochlorococcus marinus (strain MIT 9301), this protein is D-alanine--D-alanine ligase.